Reading from the N-terminus, the 568-residue chain is UPF0313 protein FN0734 (568 aa).

The Radical SAM core domain maps to 289–562 (ALDTIKYSVT…KQKQKDIVTE (274 aa)). C303, C307, and C310 together coordinate [4Fe-4S] cluster. A disordered region spans residues 546-568 (VEKDNGKKQKQKDIVTEKRKNRK).

The protein belongs to the UPF0313 family. Requires [4Fe-4S] cluster as cofactor.

This is UPF0313 protein FN0734 from Fusobacterium nucleatum subsp. nucleatum (strain ATCC 25586 / DSM 15643 / BCRC 10681 / CIP 101130 / JCM 8532 / KCTC 2640 / LMG 13131 / VPI 4355).